The following is a 624-amino-acid chain: Chaperone protein HtpG (624 aa).

Residues 1-336 form an a; substrate-binding region; sequence MKGQETRGFQ…SNDLPLNVSR (336 aa). Residues 337-552 form a b region; the sequence is EILQDSTVTR…ADEMSTQMAK (216 aa). Residues 553-624 form a c region; the sequence is LFAAAGQAVP…IRRMNQLLVS (72 aa).

It belongs to the heat shock protein 90 family. As to quaternary structure, homodimer.

Its subcellular location is the cytoplasm. In terms of biological role, molecular chaperone. Has ATPase activity. This is Chaperone protein HtpG from Citrobacter koseri (strain ATCC BAA-895 / CDC 4225-83 / SGSC4696).